The sequence spans 430 residues: tRNA(Ile)-lysidine synthase (430 aa).

21-26 is a binding site for ATP; it reads SGGLDS.

This sequence belongs to the tRNA(Ile)-lysidine synthase family.

It localises to the cytoplasm. The enzyme catalyses cytidine(34) in tRNA(Ile2) + L-lysine + ATP = lysidine(34) in tRNA(Ile2) + AMP + diphosphate + H(+). In terms of biological role, ligates lysine onto the cytidine present at position 34 of the AUA codon-specific tRNA(Ile) that contains the anticodon CAU, in an ATP-dependent manner. Cytidine is converted to lysidine, thus changing the amino acid specificity of the tRNA from methionine to isoleucine. This is tRNA(Ile)-lysidine synthase from Salmonella paratyphi B (strain ATCC BAA-1250 / SPB7).